Reading from the N-terminus, the 211-residue chain is Outer-membrane lipoprotein carrier protein (211 aa).

The N-terminal stretch at 1–24 is a signal peptide; the sequence is MNTIKILIGLLGIFLFSLSGIVSA.

Belongs to the LolA family. In terms of assembly, monomer.

The protein resides in the periplasm. Functionally, participates in the translocation of lipoproteins from the inner membrane to the outer membrane. Only forms a complex with a lipoprotein if the residue after the N-terminal Cys is not an aspartate (The Asp acts as a targeting signal to indicate that the lipoprotein should stay in the inner membrane). The protein is Outer-membrane lipoprotein carrier protein of Coxiella burnetii (strain CbuK_Q154) (Coxiella burnetii (strain Q154)).